The sequence spans 188 residues: MFLIVGLGNPGKEYEHTRHNVGFDIIDVISEKYNIDLNKKKFKGMYGDGTIANEKVILLKPLTYMNLSGESIKEVTDFYKIPKENVIVIYDDISLEVGRMRIREKGSAGGHNGIKNIIAHFGSDVFPRIKVGVGQPVQRDLVSHVLGKFNKDDREILSKVFEAASDAAENIIEKGTAEAMNKFNGFKA.

Tyr-14 provides a ligand contact to tRNA. His-19 serves as the catalytic Proton acceptor. Residues Tyr-64, Asn-66, and Asn-112 each contribute to the tRNA site.

It belongs to the PTH family. As to quaternary structure, monomer.

The protein resides in the cytoplasm. The catalysed reaction is an N-acyl-L-alpha-aminoacyl-tRNA + H2O = an N-acyl-L-amino acid + a tRNA + H(+). Functionally, hydrolyzes ribosome-free peptidyl-tRNAs (with 1 or more amino acids incorporated), which drop off the ribosome during protein synthesis, or as a result of ribosome stalling. In terms of biological role, catalyzes the release of premature peptidyl moieties from peptidyl-tRNA molecules trapped in stalled 50S ribosomal subunits, and thus maintains levels of free tRNAs and 50S ribosomes. This chain is Peptidyl-tRNA hydrolase, found in Clostridium novyi (strain NT).